The chain runs to 193 residues: Acyl-homoserine-lactone synthase (193 aa).

Belongs to the autoinducer synthase family.

It carries out the reaction a fatty acyl-[ACP] + S-adenosyl-L-methionine = an N-acyl-L-homoserine lactone + S-methyl-5'-thioadenosine + holo-[ACP] + H(+). Its function is as follows. Required for the synthesis of N-(3-oxodecanoyl)-L-homoserine lactone (ODHL), an autoinducer molecule which binds to VanR. This chain is Acyl-homoserine-lactone synthase (vanI), found in Vibrio anguillarum (Listonella anguillarum).